Reading from the N-terminus, the 519-residue chain is Membrane-bound glycerophospholipid O-acyltransferase 2 (519 aa).

The next 6 helical transmembrane spans lie at 22 to 42 (PIDQ…AVWF), 61 to 81 (TLLG…HFLV), 88 to 108 (CIMI…FALG), 184 to 204 (FMGI…FIEG), 236 to 256 (LLVC…LPVE), and 263 to 283 (FQAT…LLAA). Catalysis depends on residues Asn-341 and His-372. 3 consecutive transmembrane segments (helical) span residues 365–385 (FFLS…FLTG), 415–435 (LITW…FVLL), and 443–463 (FYSS…LLLP). Residues 497 to 519 (FSTMNNVCNQNRDTGSRHSSLTQ) form a disordered region.

It belongs to the membrane-bound acyltransferase family. In terms of tissue distribution, highly expressed in epididymis, brain, testis, and ovary.

It is found in the endoplasmic reticulum membrane. It carries out the reaction a 1-acyl-sn-glycero-3-phosphocholine + an acyl-CoA = a 1,2-diacyl-sn-glycero-3-phosphocholine + CoA. It catalyses the reaction a 1-acyl-sn-glycero-3-phosphoethanolamine + an acyl-CoA = a 1,2-diacyl-sn-glycero-3-phosphoethanolamine + CoA. The catalysed reaction is a 1-O-(1Z-alkenyl)-sn-glycero-3-phosphocholine + (9Z)-octadecenoyl-CoA = 1-O-(1Z)-alkenyl-2-(9Z)-octadecenoyl-sn-glycero-3-phosphocholine + CoA. The enzyme catalyses a 1-O-(1Z-alkenyl)-sn-glycero-3-phosphoethanolamine + (9Z)-octadecenoyl-CoA = 1-O-(1Z)-alkenyl-2-(9Z)-octadecenoyl-sn-glycero-3-phosphoethanolamine + CoA. It carries out the reaction 1-octadecanoyl-sn-glycero-3-phosphoethanolamine + (9Z)-octadecenoyl-CoA = 1-octadecanoyl-2-(9Z-octadecenoyl)-sn-glycero-3-phosphoethanolamine + CoA. It catalyses the reaction 1-octadecanoyl-sn-glycero-3-phosphocholine + (9Z)-octadecenoyl-CoA = 1-octadecanoyl-2-(9Z-octadecenoyl)-sn-glycero-3-phosphocholine + CoA. The catalysed reaction is 1-(9Z-octadecenoyl)-sn-glycero-3-phosphoethanolamine + (9Z)-octadecenoyl-CoA = 1,2-di-(9Z-octadecenoyl)-sn-glycero-3-phosphoethanolamine + CoA. The enzyme catalyses 1-hexadecanoyl-sn-glycero-3-phosphoethanolamine + (9Z)-octadecenoyl-CoA = 1-hexadecanoyl-2-(9Z-octadecenoyl)-sn-glycero-3-phosphoethanolamine + CoA. It carries out the reaction 1-hexadecanoyl-sn-glycero-3-phosphocholine + (9Z)-octadecenoyl-CoA = 1-hexadecanoyl-2-(9Z-octadecenoyl)-sn-glycero-3-phosphocholine + CoA. It catalyses the reaction (9Z)-hexadecenoyl-CoA + 1-hexadecanoyl-sn-glycero-3-phosphocholine = 1-hexadecanoyl-2-(9Z-hexadecenoyl)-sn-glycero-3-phosphocholine + CoA. The catalysed reaction is 1-hexadecanoyl-sn-glycero-3-phosphoethanolamine + (9Z)-hexadecenoyl-CoA = 1-hexadecanoyl-2-(9Z)-hexadecenoyl-sn-glycero-3-phosphoethanolamine + CoA. The enzyme catalyses (9Z,12Z)-octadecadienoyl-CoA + 1-hexadecanoyl-sn-glycero-3-phosphocholine = 1-hexadecanoyl-2-(9Z,12Z-octadecadienoyl)-sn-glycero-3-phosphocholine + CoA. Its pathway is lipid metabolism; phospholipid metabolism. Partially inhibited by thimerosal. Functionally, acyltransferase which catalyzes the transfer of an acyl group from an acyl-CoA to a lysophospholipid leading to the production of a phospholipid and participates in the reacylation step of the phospholipid remodeling pathway also known as the Lands cycle. Catalyzes the acylation of lysophosphatidylcholine (1-acyl-sn-glycero-3-phosphocholine or LPC) and to a lesser extend lysophosphatidylethanolamine (1-acyl-sn-glycero-3-phosphoethanolamine or LPE). Does not acylates lysophosphatidic acid (LPA) and lysophosphatidylserine. Prefers oleoyl-CoA as the acyl donor. May be involved in chondrocyte differentiation. This chain is Membrane-bound glycerophospholipid O-acyltransferase 2, found in Mus musculus (Mouse).